Here is a 916-residue protein sequence, read N- to C-terminus: Probable serine/threonine-protein kinase DDB_G0267514 (916 aa).

Disordered regions lie at residues 283-311, 461-518, and 550-646; these read SGGG…SGGS, NNNQ…SPLD, and FNNQ…EPPS. 2 stretches are compositionally biased toward low complexity: residues 461 to 493 and 550 to 622; these read NNNQ…QQQP and FNNQ…LINN. Positions 623-646 are enriched in polar residues; sequence HSPNQYNNQGNILKNSGSVVEPPS. Positions 662 to 916 constitute a Protein kinase domain; the sequence is LKISSKLGEG…EILNLLNEIP (255 aa). ATP is bound by residues 668–676 and Lys689; that span reads LGEGTFGVV. Asp784 (proton acceptor) is an active-site residue.

Belongs to the protein kinase superfamily. TKL Ser/Thr protein kinase family.

The enzyme catalyses L-seryl-[protein] + ATP = O-phospho-L-seryl-[protein] + ADP + H(+). It carries out the reaction L-threonyl-[protein] + ATP = O-phospho-L-threonyl-[protein] + ADP + H(+). In Dictyostelium discoideum (Social amoeba), this protein is Probable serine/threonine-protein kinase DDB_G0267514.